Here is a 364-residue protein sequence, read N- to C-terminus: Biotin synthase (364 aa).

The interval 14–36 (DTIPPGTETPYASPSHARTEEAP) is disordered. A Radical SAM core domain is found at 70–308 (RKGPLATTCG…QRDILVCGGR (239 aa)). Residues C88, C92, and C95 each coordinate [4Fe-4S] cluster. Residues C164 and C233 each contribute to the [2Fe-2S] cluster site.

This sequence belongs to the radical SAM superfamily. Biotin synthase family. In terms of assembly, homodimer. It depends on [4Fe-4S] cluster as a cofactor. The cofactor is [2Fe-2S] cluster.

The enzyme catalyses (4R,5S)-dethiobiotin + (sulfur carrier)-SH + 2 reduced [2Fe-2S]-[ferredoxin] + 2 S-adenosyl-L-methionine = (sulfur carrier)-H + biotin + 2 5'-deoxyadenosine + 2 L-methionine + 2 oxidized [2Fe-2S]-[ferredoxin]. Its pathway is cofactor biosynthesis; biotin biosynthesis; biotin from 7,8-diaminononanoate: step 2/2. Catalyzes the conversion of dethiobiotin (DTB) to biotin by the insertion of a sulfur atom into dethiobiotin via a radical-based mechanism. The polypeptide is Biotin synthase (Nitratidesulfovibrio vulgaris (strain DSM 19637 / Miyazaki F) (Desulfovibrio vulgaris)).